The primary structure comprises 1070 residues: DNA-directed RNA polymerase subunit beta (1070 aa).

The protein belongs to the RNA polymerase beta chain family. As to quaternary structure, in plastids the minimal PEP RNA polymerase catalytic core is composed of four subunits: alpha, beta, beta', and beta''. When a (nuclear-encoded) sigma factor is associated with the core the holoenzyme is formed, which can initiate transcription.

The protein resides in the plastid. It localises to the chloroplast. It carries out the reaction RNA(n) + a ribonucleoside 5'-triphosphate = RNA(n+1) + diphosphate. Its function is as follows. DNA-dependent RNA polymerase catalyzes the transcription of DNA into RNA using the four ribonucleoside triphosphates as substrates. This Illicium oligandrum (Star anise) protein is DNA-directed RNA polymerase subunit beta.